The sequence spans 307 residues: UDP-3-O-acyl-N-acetylglucosamine deacetylase (307 aa).

Residues His-80, His-239, and Asp-243 each contribute to the Zn(2+) site. His-266 acts as the Proton donor in catalysis.

It belongs to the LpxC family. The cofactor is Zn(2+).

The catalysed reaction is a UDP-3-O-[(3R)-3-hydroxyacyl]-N-acetyl-alpha-D-glucosamine + H2O = a UDP-3-O-[(3R)-3-hydroxyacyl]-alpha-D-glucosamine + acetate. It participates in glycolipid biosynthesis; lipid IV(A) biosynthesis; lipid IV(A) from (3R)-3-hydroxytetradecanoyl-[acyl-carrier-protein] and UDP-N-acetyl-alpha-D-glucosamine: step 2/6. Its function is as follows. Catalyzes the hydrolysis of UDP-3-O-myristoyl-N-acetylglucosamine to form UDP-3-O-myristoylglucosamine and acetate, the committed step in lipid A biosynthesis. In Neisseria meningitidis serogroup C / serotype 2a (strain ATCC 700532 / DSM 15464 / FAM18), this protein is UDP-3-O-acyl-N-acetylglucosamine deacetylase.